Reading from the N-terminus, the 224-residue chain is Phosphoribosylformylglycinamidine synthase subunit PurQ (224 aa).

One can recognise a Glutamine amidotransferase type-1 domain in the interval 1–224 (MIAIIKFPGT…ILLRRLGEWA (224 aa)). Residue cysteine 84 is the Nucleophile of the active site. Active-site residues include histidine 196 and glutamate 198.

In terms of assembly, part of the FGAM synthase complex composed of 1 PurL, 1 PurQ and 2 PurS subunits.

It localises to the cytoplasm. The enzyme catalyses N(2)-formyl-N(1)-(5-phospho-beta-D-ribosyl)glycinamide + L-glutamine + ATP + H2O = 2-formamido-N(1)-(5-O-phospho-beta-D-ribosyl)acetamidine + L-glutamate + ADP + phosphate + H(+). It carries out the reaction L-glutamine + H2O = L-glutamate + NH4(+). It participates in purine metabolism; IMP biosynthesis via de novo pathway; 5-amino-1-(5-phospho-D-ribosyl)imidazole from N(2)-formyl-N(1)-(5-phospho-D-ribosyl)glycinamide: step 1/2. Functionally, part of the phosphoribosylformylglycinamidine synthase complex involved in the purines biosynthetic pathway. Catalyzes the ATP-dependent conversion of formylglycinamide ribonucleotide (FGAR) and glutamine to yield formylglycinamidine ribonucleotide (FGAM) and glutamate. The FGAM synthase complex is composed of three subunits. PurQ produces an ammonia molecule by converting glutamine to glutamate. PurL transfers the ammonia molecule to FGAR to form FGAM in an ATP-dependent manner. PurS interacts with PurQ and PurL and is thought to assist in the transfer of the ammonia molecule from PurQ to PurL. The chain is Phosphoribosylformylglycinamidine synthase subunit PurQ from Saccharolobus solfataricus (strain ATCC 35092 / DSM 1617 / JCM 11322 / P2) (Sulfolobus solfataricus).